The sequence spans 215 residues: MKTEVKICGLKTAEAVERAVALGASHVGFIFFPKSPRNIEPDDAGRLAARARGRAKIVAVTVDADNDGLDEIVSALDPDVLQLHGSETPERVLSIKALYGLPVMKALAVREASDLERIDPYLGIVDRFLLDAKPPAGSDLPGGNGISFDWRLLDALDGSVDYMLSGGLNAGNIADALALTGARAIDTSSGVESAPGIKDLTLMEAFFEAVRRAEA.

The protein belongs to the TrpF family.

The enzyme catalyses N-(5-phospho-beta-D-ribosyl)anthranilate = 1-(2-carboxyphenylamino)-1-deoxy-D-ribulose 5-phosphate. The protein operates within amino-acid biosynthesis; L-tryptophan biosynthesis; L-tryptophan from chorismate: step 3/5. In Rhizobium meliloti (strain 1021) (Ensifer meliloti), this protein is N-(5'-phosphoribosyl)anthranilate isomerase.